The sequence spans 521 residues: AAA ATPase forming ring-shaped complexes (521 aa).

Residues 4-44 (TEDLAALNDRLMAKNHALAEALSRAGKELTKAKSQLAQLAQ) are a coiled coil. 235 to 240 (GNGKTM) is a binding site for ATP.

The protein belongs to the AAA ATPase family. In terms of assembly, homohexamer. Assembles into a hexameric ring structure.

In Bifidobacterium longum (strain NCC 2705), this protein is AAA ATPase forming ring-shaped complexes.